Here is a 359-residue protein sequence, read N- to C-terminus: Guanine nucleotide-binding protein alpha-4 subunit (359 aa).

A lipid anchor (N-myristoyl glycine) is attached at glycine 2. Cysteine 3 carries S-palmitoyl cysteine lipidation. Positions 31–359 (GEIKLLLLGA…RNNLYLCGLY (329 aa)) constitute a G-alpha domain. Positions 34–47 (KLLLLGAGESGKST) are G1 motif. GTP contacts are provided by residues 39–46 (GAGESGKS), 178–184 (LRARVKS), 203–207 (DVGGQ), 272–275 (NKMD), and alanine 331. Residue serine 46 coordinates Mg(2+). The interval 176–184 (DILRARVKS) is G2 motif. Positions 199–208 (FKMFDVGGQR) are G3 motif. Positions 268–275 (ILFLNKMD) are G4 motif. Residues 329 to 334 (TCATDT) form a G5 motif region.

It belongs to the G-alpha family. G(i/o/t/z) subfamily. G proteins are composed of 3 units; alpha, beta and gamma. The alpha chain contains the guanine nucleotide binding site. Expressed in ASI neurons.

Functionally, guanine nucleotide-binding proteins (G proteins) are involved as modulators or transducers in various transmembrane signaling systems. Acts in concert with npr-15 to activate TGF-beta-like daf-7 secretion in the ASI neuron, thereby promoting larval development and inhibition of dauer diapause. The chain is Guanine nucleotide-binding protein alpha-4 subunit (gpa-4) from Caenorhabditis elegans.